Consider the following 365-residue polypeptide: Chaperone protein DnaJ (365 aa).

The J domain occupies 4–70 (DYYKILGVDR…QKRRMYDQTG (67 aa)). The segment at 139–220 (GTEKRIKYRR…CNGTGTVVVN (82 aa)) adopts a CR-type zinc-finger fold. The Zn(2+) site is built by Cys152, Cys155, Cys168, Cys171, Cys194, Cys197, Cys208, and Cys211. 4 CXXCXGXG motif repeats span residues 152-159 (CPDCNGTG), 168-175 (CPTCNGTG), 194-201 (CQTCGGRG), and 208-215 (CPRCNGTG).

Belongs to the DnaJ family. As to quaternary structure, homodimer. Requires Zn(2+) as cofactor.

It is found in the cytoplasm. Participates actively in the response to hyperosmotic and heat shock by preventing the aggregation of stress-denatured proteins and by disaggregating proteins, also in an autonomous, DnaK-independent fashion. Unfolded proteins bind initially to DnaJ; upon interaction with the DnaJ-bound protein, DnaK hydrolyzes its bound ATP, resulting in the formation of a stable complex. GrpE releases ADP from DnaK; ATP binding to DnaK triggers the release of the substrate protein, thus completing the reaction cycle. Several rounds of ATP-dependent interactions between DnaJ, DnaK and GrpE are required for fully efficient folding. Also involved, together with DnaK and GrpE, in the DNA replication of plasmids through activation of initiation proteins. This Thermoplasma acidophilum (strain ATCC 25905 / DSM 1728 / JCM 9062 / NBRC 15155 / AMRC-C165) protein is Chaperone protein DnaJ.